Reading from the N-terminus, the 860-residue chain is Eukaryotic translation initiation factor 3 subunit C (860 aa).

A disordered region spans residues 1 to 76; sequence MSRFFYGNDS…SEESEEEDVV (76 aa). A compositionally biased stretch (acidic residues) spans 10 to 51; that stretch reads SDSDSSGSDEEELYSDEEVEQSEEESSEEDASSEEESSEDED. The PCI domain maps to 599-773; it reads FHMHINLELL…DAIVFRKGVE (175 aa). Positions 812–860 are disordered; sequence RDQGAGARGGRGPRGGGQARGGPRLPGGQQRRPGGQQFGGGALGGAIKA. Positions 817–831 are enriched in gly residues; the sequence is GARGGRGPRGGGQAR. The segment covering 832–846 has biased composition (low complexity); the sequence is GGPRLPGGQQRRPGG. Residues 847–860 are compositionally biased toward gly residues; that stretch reads QQFGGGALGGAIKA.

It belongs to the eIF-3 subunit C family. Component of the eukaryotic translation initiation factor 3 (eIF-3) complex.

It localises to the cytoplasm. Functionally, component of the eukaryotic translation initiation factor 3 (eIF-3) complex, which is involved in protein synthesis of a specialized repertoire of mRNAs and, together with other initiation factors, stimulates binding of mRNA and methionyl-tRNAi to the 40S ribosome. The eIF-3 complex specifically targets and initiates translation of a subset of mRNAs involved in cell proliferation. This is Eukaryotic translation initiation factor 3 subunit C (nip1) from Emericella nidulans (strain FGSC A4 / ATCC 38163 / CBS 112.46 / NRRL 194 / M139) (Aspergillus nidulans).